We begin with the raw amino-acid sequence, 125 residues long: uncharacterized protein (125 aa).

It is found in the mitochondrion. This is an uncharacterized protein from Paramecium tetraurelia.